The primary structure comprises 93 residues: UPF0213 protein CPE1444 (93 aa).

Residues 1-75 (MNYVYILKCK…KKLTRNQKLQ (75 aa)) form the GIY-YIG domain.

It belongs to the UPF0213 family.

The protein is UPF0213 protein CPE1444 of Clostridium perfringens (strain 13 / Type A).